Here is a 282-residue protein sequence, read N- to C-terminus: uncharacterized protein (282 aa).

Disordered regions lie at residues 1–45 and 201–259; these read MPLE…EEDE and DRRR…KPWG. The segment covering 10 to 19 has biased composition (basic and acidic residues); the sequence is SEMKEFKEST. Polar residues predominate over residues 26-38; the sequence is SVSSEETLTQSMV. Residues 201 to 237 show a composition bias toward basic and acidic residues; it reads DRRRKEDSKARSRLTRREEHSEHHRSGKSRRERERRS.

This is an uncharacterized protein from Ostreid herpesvirus 1 (isolate France) (OsHV-1).